A 134-amino-acid polypeptide reads, in one-letter code: Putative protein KRIP1 (134 aa).

The tract at residues 1-134 (MSPVHRSRTS…PDPALPLQML (134 aa)) is disordered. Polar residues-rich tracts occupy residues 9 to 24 (TSQT…TLSF), 43 to 55 (SQPN…SHVS), and 64 to 79 (CSQS…TNPN). Residues 119 to 128 (PAKPALPDPA) are compositionally biased toward pro residues.

As to expression, abundant expression is found in prostate, restricted to cells of epithelial origin in normal and diseased glands. Very low expression is detected in pancreas and ovary.

It is found in the cytoplasm. Its subcellular location is the nucleus. This is Putative protein KRIP1 (KLKP1) from Homo sapiens (Human).